The sequence spans 385 residues: Cotranscriptional regulator ARB2A homolog (385 aa).

Disordered stretches follow at residues 1–65 and 220–239; these read MSDI…NGEE and EEQKEKAKEEEEKKDDNGKL. The span at 52–62 shows a compositional bias: low complexity; it reads NNNNNNSNNSN. Basic and acidic residues predominate over residues 220–238; that stretch reads EEQKEKAKEEEEKKDDNGK.

The protein belongs to the ARB2A family.

The sequence is that of Cotranscriptional regulator ARB2A homolog from Dictyostelium discoideum (Social amoeba).